The sequence spans 166 residues: HTH-type transcriptional regulator PrsX (166 aa).

An HTH marR-type domain is found at 25–159 (EHLLMQLCIR…FEVINKKLLA (135 aa)).

The protein localises to the cytoplasm. The protein is HTH-type transcriptional regulator PrsX (prsX) of Escherichia coli O6:H1 (strain CFT073 / ATCC 700928 / UPEC).